The sequence spans 320 residues: MLIDQFGRKINYLRISVTQRCNFRCLYCMPKIPFDYQPKENLLSFEELFLFVKAAIDEGIEKIRITGGEPLLRKDLSIFIKMISDYKSDIDLAITTNGFLLKDFAKDLKNAGLKRLNISLDTLDHKKAKTLAQKDVLDSVLSGIDEALNLDLKVKLNTVALKNLNDDELISLLEFAKSKKAQIRFIEFMENTHAYGKLQGLKRDEIIQILSQKYQIQLIKKDEKAPVSIYKADDYEFGIIDPHSHEFCDSCNRIRLSAEGLLIPCLYFDEALSIKEAVRKGDIKAAVEILQEVLRNKPEKNKWSVVDNETSSRAFYQTGG.

One can recognise a Radical SAM core domain in the interval 5 to 225 (QFGRKINYLR…IQLIKKDEKA (221 aa)). Residue arginine 14 participates in GTP binding. [4Fe-4S] cluster contacts are provided by cysteine 21 and cysteine 25. S-adenosyl-L-methionine is bound at residue tyrosine 27. Cysteine 28 contacts [4Fe-4S] cluster. Arginine 64 is a binding site for GTP. Glycine 68 contacts S-adenosyl-L-methionine. Threonine 95 lines the GTP pocket. Serine 119 lines the S-adenosyl-L-methionine pocket. Residue lysine 155 coordinates GTP. Methionine 189 is an S-adenosyl-L-methionine binding site. Positions 248 and 251 each coordinate [4Fe-4S] cluster. 253–255 (RIR) contributes to the GTP binding site. A [4Fe-4S] cluster-binding site is contributed by cysteine 265.

The protein belongs to the radical SAM superfamily. MoaA family. In terms of assembly, monomer and homodimer. [4Fe-4S] cluster is required as a cofactor.

It catalyses the reaction GTP + AH2 + S-adenosyl-L-methionine = (8S)-3',8-cyclo-7,8-dihydroguanosine 5'-triphosphate + 5'-deoxyadenosine + L-methionine + A + H(+). It functions in the pathway cofactor biosynthesis; molybdopterin biosynthesis. Catalyzes the cyclization of GTP to (8S)-3',8-cyclo-7,8-dihydroguanosine 5'-triphosphate. This is GTP 3',8-cyclase from Campylobacter jejuni subsp. jejuni serotype O:6 (strain 81116 / NCTC 11828).